Reading from the N-terminus, the 133-residue chain is ATP synthase epsilon chain, chloroplastic (133 aa).

This sequence belongs to the ATPase epsilon chain family. F-type ATPases have 2 components, CF(1) - the catalytic core - and CF(0) - the membrane proton channel. CF(1) has five subunits: alpha(3), beta(3), gamma(1), delta(1), epsilon(1). CF(0) has three main subunits: a, b and c.

Its subcellular location is the plastid. It is found in the chloroplast thylakoid membrane. In terms of biological role, produces ATP from ADP in the presence of a proton gradient across the membrane. The chain is ATP synthase epsilon chain, chloroplastic from Piper cenocladum (Ant piper).